We begin with the raw amino-acid sequence, 377 residues long: Phospho-N-acetylmuramoyl-pentapeptide-transferase (377 aa).

A run of 10 helical transmembrane segments spans residues 2–22, 55–75, 82–102, 122–142, 162–182, 195–215, 236–256, 263–283, 288–308, and 343–363; these read IQLLMAAGLGLVFSIFGTPAL, VAILLSVVAAYLVTHLISVLA, ITLSGLLALGLMLGMGMVGFL, MVLQGAIGSAFAVLVLFFPDA, LAFAGPVVGLILFVVWVNLIA, LDGLATGASILVFSGYMLITL, PMDLSIVAAALVGALIGFLWW, IFMGDTGSLGLGGALAAFAVL, LLLVLIAGLFVVITMSVILQV, and FWVIAGLFVAAALGVFYGDWL.

Belongs to the glycosyltransferase 4 family. MraY subfamily. The cofactor is Mg(2+).

It is found in the cell membrane. The enzyme catalyses UDP-N-acetyl-alpha-D-muramoyl-L-alanyl-gamma-D-glutamyl-meso-2,6-diaminopimeloyl-D-alanyl-D-alanine + di-trans,octa-cis-undecaprenyl phosphate = di-trans,octa-cis-undecaprenyl diphospho-N-acetyl-alpha-D-muramoyl-L-alanyl-D-glutamyl-meso-2,6-diaminopimeloyl-D-alanyl-D-alanine + UMP. Its pathway is cell wall biogenesis; peptidoglycan biosynthesis. In terms of biological role, catalyzes the initial step of the lipid cycle reactions in the biosynthesis of the cell wall peptidoglycan: transfers peptidoglycan precursor phospho-MurNAc-pentapeptide from UDP-MurNAc-pentapeptide onto the lipid carrier undecaprenyl phosphate, yielding undecaprenyl-pyrophosphoryl-MurNAc-pentapeptide, known as lipid I. This chain is Phospho-N-acetylmuramoyl-pentapeptide-transferase, found in Kocuria rhizophila (strain ATCC 9341 / DSM 348 / NBRC 103217 / DC2201).